The chain runs to 186 residues: Large ribosomal subunit protein uL22 (186 aa).

The disordered stretch occupies residues 159 to 186 (KATDEEPTKKKLSKKKLQRQKEKMMRSE). Over residues 177–186 (RQKEKMMRSE) the composition is skewed to basic and acidic residues.

This sequence belongs to the universal ribosomal protein uL22 family.

The chain is Large ribosomal subunit protein uL22 (RpL17) from Phlebotomus papatasi (Sandfly).